The chain runs to 395 residues: 1-deoxy-D-xylulose 5-phosphate reductoisomerase (395 aa).

Residues T10, G11, S12, I13, R37, Q38, and N124 each contribute to the NADPH site. Position 125 (K125) interacts with 1-deoxy-D-xylulose 5-phosphate. E126 serves as a coordination point for NADPH. Position 150 (D150) interacts with Mn(2+). Positions 151, 152, 179, and 202 each coordinate 1-deoxy-D-xylulose 5-phosphate. E152 provides a ligand contact to Mn(2+). G208 is a binding site for NADPH. Residues S215, N220, K221, and E224 each contribute to the 1-deoxy-D-xylulose 5-phosphate site. Position 224 (E224) interacts with Mn(2+).

The protein belongs to the DXR family. Mg(2+) is required as a cofactor. The cofactor is Mn(2+).

The catalysed reaction is 2-C-methyl-D-erythritol 4-phosphate + NADP(+) = 1-deoxy-D-xylulose 5-phosphate + NADPH + H(+). Its pathway is isoprenoid biosynthesis; isopentenyl diphosphate biosynthesis via DXP pathway; isopentenyl diphosphate from 1-deoxy-D-xylulose 5-phosphate: step 1/6. Catalyzes the NADPH-dependent rearrangement and reduction of 1-deoxy-D-xylulose-5-phosphate (DXP) to 2-C-methyl-D-erythritol 4-phosphate (MEP). The protein is 1-deoxy-D-xylulose 5-phosphate reductoisomerase of Cupriavidus pinatubonensis (strain JMP 134 / LMG 1197) (Cupriavidus necator (strain JMP 134)).